We begin with the raw amino-acid sequence, 400 residues long: 2-octaprenylphenol hydroxylase (400 aa).

Residues 49–52 and 297–303 each bind FAD; these read RVSA and LAGQGVN.

Belongs to the UbiH/COQ6 family. As to quaternary structure, homotetramer. Component of the Ubi complex metabolon, which regroups five ubiquinone biosynthesis proteins (UbiE, UbiF, UbiG, UbiH and UbiI) and two accessory factors (UbiK and the lipid-binding protein UbiJ). It depends on FAD as a cofactor.

It is found in the cytoplasm. It carries out the reaction 2-all-trans-octaprenylphenol + NADPH + O2 + H(+) = 3-(all-trans-octaprenyl)benzene-1,2-diol + NADP(+) + H2O. The enzyme catalyses a 2-(all-trans-polyprenyl)phenol + NADPH + O2 + H(+) = a 3-(all-trans-polyprenyl)benzene-1,2-diol + NADP(+) + H2O. Its pathway is cofactor biosynthesis; ubiquinone biosynthesis. Functionally, FAD-dependent monooxygenase required for the aerobic hydroxylation of 2-octaprenylphenol to 2-octaprenyl-6-hydroxy-phenol, the first hydroxylation step in coenzyme Q (ubiquinone) biosynthesis. The sequence is that of 2-octaprenylphenol hydroxylase from Escherichia coli (strain K12).